Reading from the N-terminus, the 358-residue chain is Flap endonuclease 1 (358 aa).

The segment at M1–R103 is N-domain. D34 is a binding site for Mg(2+). DNA contacts are provided by R47 and R69. Positions 85, 157, 159, 178, and 180 each coordinate Mg(2+). The segment at L121–Y252 is I-domain. Residue E157 coordinates DNA. G230 and D232 together coordinate DNA. D232 is a Mg(2+) binding site. The interval K346–F354 is interaction with PCNA.

The protein belongs to the XPG/RAD2 endonuclease family. FEN1 subfamily. Interacts with PCNA. Three molecules of FEN1 bind to one PCNA trimer with each molecule binding to one PCNA monomer. PCNA stimulates the nuclease activity without altering cleavage specificity. Mg(2+) serves as cofactor. Phosphorylated. Phosphorylation upon DNA damage induces relocalization to the nuclear plasma.

Its subcellular location is the nucleus. It localises to the nucleolus. The protein resides in the nucleoplasm. The protein localises to the mitochondrion. Its function is as follows. Structure-specific nuclease with 5'-flap endonuclease and 5'-3' exonuclease activities involved in DNA replication and repair. During DNA replication, cleaves the 5'-overhanging flap structure that is generated by displacement synthesis when DNA polymerase encounters the 5'-end of a downstream Okazaki fragment. It enters the flap from the 5'-end and then tracks to cleave the flap base, leaving a nick for ligation. Also involved in the long patch base excision repair (LP-BER) pathway, by cleaving within the apurinic/apyrimidinic (AP) site-terminated flap. Acts as a genome stabilization factor that prevents flaps from equilibrating into structures that lead to duplications and deletions. Also possesses 5'-3' exonuclease activity on nicked or gapped double-stranded DNA, and exhibits RNase H activity. Also involved in replication and repair of rDNA and in repairing mitochondrial DNA. The sequence is that of Flap endonuclease 1 from Enterocytozoon bieneusi (strain H348) (Microsporidian parasite).